We begin with the raw amino-acid sequence, 455 residues long: Oxysterols receptor LXR-beta (455 aa).

Residues M1 to D10 show a composition bias toward polar residues. Positions M1–S53 are disordered. Residues M1 to E80 form a transactivation AF-1; required for ligand-independent transactivation function region. The span at P14 to G26 shows a compositional bias: low complexity. Residues D79–S156 constitute a DNA-binding region (nuclear receptor). 2 NR C4-type zinc fingers span residues C82–C102 and C120–C144. A disordered region spans residues K164–E210. A compositionally biased stretch (low complexity) spans Q168–G193. The segment covering A194–E210 has biased composition (gly residues). Residues L214–E455 are transactivation AF-2; required for ligand-dependent transactivation function; mediates interaction with CCAR2. The NR LBD domain maps to A217–E455. Residues K404 and K442 each participate in a glycyl lysine isopeptide (Lys-Gly) (interchain with G-Cter in SUMO2) cross-link.

Belongs to the nuclear hormone receptor family. NR1 subfamily. In terms of assembly, forms a heterodimer with RXR. Interacts with CCAR2 (via N-terminus) in a ligand-independent manner. Interacts (when sumoylated) with GPS2; interaction with GPS2 onto hepatic acute phase protein promoters prevents N-Cor corepressor complex dissociation. Interacts with ABCA12 and ABCA1; this interaction is required for ABCA1 localization to the cell surface and is necessary for its normal activity and stability. Post-translationally, sumoylated by SUMO2 at Lys-404 and Lys-442 during the hepatic acute phase response, leading to promote interaction with GPS2 and prevent N-Cor corepressor complex dissociation.

It localises to the nucleus. Functionally, nuclear receptor that exhibits a ligand-dependent transcriptional activation activity. Binds preferentially to double-stranded oligonucleotide direct repeats having the consensus half-site sequence 5'-AGGTCA-3' and 4-nt spacing (DR-4). Regulates cholesterol uptake through MYLIP-dependent ubiquitination of LDLR, VLDLR and LRP8; DLDLR and LRP8. Interplays functionally with RORA for the regulation of genes involved in liver metabolism. Induces LPCAT3-dependent phospholipid remodeling in endoplasmic reticulum (ER) membranes of hepatocytes, driving SREBF1 processing and lipogenesis. Via LPCAT3, triggers the incorporation of arachidonate into phosphatidylcholines of ER membranes, increasing membrane dynamics and enabling triacylglycerols transfer to nascent very low-density lipoprotein (VLDL) particles. Via LPCAT3 also counteracts lipid-induced ER stress response and inflammation, likely by modulating SRC kinase membrane compartmentalization and limiting the synthesis of lipid inflammatory mediators. Plays an anti-inflammatory role during the hepatic acute phase response by acting as a corepressor: inhibits the hepatic acute phase response by preventing dissociation of the N-Cor corepressor complex. This chain is Oxysterols receptor LXR-beta (NR1H2), found in Bos taurus (Bovine).